Here is an 831-residue protein sequence, read N- to C-terminus: Multiphosphoryl transfer protein (831 aa).

The region spanning 1-90 (MLTIQFLCPL…EYIQVRFIDS (90 aa)) is the HPr domain. His-15 functions as the Pros-phosphohistidine intermediate; for HPr activity in the catalytic mechanism. Residue His-15 is modified to Phosphohistidine; by EI. The interval 119-650 (GNVLASGVGV…AVKSQLRQLD (532 aa)) is PTS EI. His-298 serves as the catalytic Tele-phosphohistidine intermediate; for PTS EI activity. The residue at position 298 (His-298) is a Phosphohistidine; by autocatalysis. 2 residues coordinate phosphoenolpyruvate: Arg-405 and Arg-441. Glu-540 and Asp-564 together coordinate Mg(2+). Residues 563-564 (ND) and Arg-574 each bind phosphoenolpyruvate. The active-site Proton donor; for EI activity is Cys-611. The 144-residue stretch at 685-828 (PLLALENIFV…QSILTLLETE (144 aa)) folds into the PTS EIIA type-2 domain. His-747 (tele-phosphohistidine intermediate; for PTS EIIA activity) is an active-site residue. His-747 carries the post-translational modification Phosphohistidine; by HPr.

It belongs to the PEP-utilizing enzyme family. Mg(2+) serves as cofactor.

It localises to the cytoplasm. It carries out the reaction L-histidyl-[protein] + phosphoenolpyruvate = N(pros)-phospho-L-histidyl-[protein] + pyruvate. The catalysed reaction is D-fructose(out) + N(pros)-phospho-L-histidyl-[protein] = D-fructose 1-phosphate(in) + L-histidyl-[protein]. In terms of biological role, multifunctional protein that includes general (non sugar-specific) and sugar-specific components of the phosphoenolpyruvate-dependent sugar phosphotransferase system (sugar PTS). This major carbohydrate active transport system catalyzes the phosphorylation of incoming sugar substrates concomitantly with their translocation across the cell membrane. The enzyme II FryABC PTS system is involved in fructose transport. This is Multiphosphoryl transfer protein (fryA) from Escherichia coli O6:H1 (strain CFT073 / ATCC 700928 / UPEC).